We begin with the raw amino-acid sequence, 408 residues long: Imidazolonepropionase (408 aa).

Fe(3+) contacts are provided by H73 and H75. Residues H73 and H75 each coordinate Zn(2+). Residues R82, Y145, and H178 each coordinate 4-imidazolone-5-propanoate. N-formimidoyl-L-glutamate is bound at residue Y145. H243 is a Fe(3+) binding site. H243 is a binding site for Zn(2+). Residue Q246 participates in 4-imidazolone-5-propanoate binding. Residue D318 coordinates Fe(3+). Residue D318 coordinates Zn(2+). The N-formimidoyl-L-glutamate site is built by N320 and G322. S323 provides a ligand contact to 4-imidazolone-5-propanoate.

The protein belongs to the metallo-dependent hydrolases superfamily. HutI family. Zn(2+) serves as cofactor. Fe(3+) is required as a cofactor.

The protein resides in the cytoplasm. It catalyses the reaction 4-imidazolone-5-propanoate + H2O = N-formimidoyl-L-glutamate. It functions in the pathway amino-acid degradation; L-histidine degradation into L-glutamate; N-formimidoyl-L-glutamate from L-histidine: step 3/3. Functionally, catalyzes the hydrolytic cleavage of the carbon-nitrogen bond in imidazolone-5-propanoate to yield N-formimidoyl-L-glutamate. It is the third step in the universal histidine degradation pathway. This is Imidazolonepropionase from Shewanella baltica (strain OS185).